We begin with the raw amino-acid sequence, 671 residues long: Nucleolar GTP-binding protein 1 (671 aa).

The region spanning 169–350 (RTVLICGYPN…VKNAACERLL (182 aa)) is the OBG-type G domain. GTP contacts are provided by residues 175–182 (GYPNVGKS), 221–225 (DTPGI), and 289–292 (NKTD). The disordered stretch occupies residues 516–671 (VAQNRSTVPR…KRGKGKTDRR (156 aa)). Over residues 595-605 (RAMSISRSQSR) the composition is skewed to polar residues. Basic residues-rich tracts occupy residues 631 to 640 (NKSHKKRDKN) and 654 to 671 (RPKH…TDRR).

Belongs to the TRAFAC class OBG-HflX-like GTPase superfamily. OBG GTPase family. NOG subfamily.

It localises to the nucleus. Its subcellular location is the nucleolus. Involved in the biogenesis of the 60S ribosomal subunit. The chain is Nucleolar GTP-binding protein 1 from Arabidopsis thaliana (Mouse-ear cress).